Here is a 634-residue protein sequence, read N- to C-terminus: DNA-directed RNA polymerase subunit gamma (634 aa).

Residues cysteine 74, cysteine 76, cysteine 89, and cysteine 92 each coordinate Zn(2+). The Mg(2+) site is built by aspartate 471, aspartate 473, and aspartate 475.

Belongs to the RNA polymerase beta' chain family. RpoC1 subfamily. In cyanobacteria the RNAP catalytic core is composed of 2 alpha, 1 beta, 1 beta', 1 gamma and 1 omega subunit. When a sigma factor is associated with the core the holoenzyme is formed, which can initiate transcription. Mg(2+) is required as a cofactor. It depends on Zn(2+) as a cofactor.

It carries out the reaction RNA(n) + a ribonucleoside 5'-triphosphate = RNA(n+1) + diphosphate. Functionally, DNA-dependent RNA polymerase catalyzes the transcription of DNA into RNA using the four ribonucleoside triphosphates as substrates. The sequence is that of DNA-directed RNA polymerase subunit gamma from Prochlorococcus marinus subsp. pastoris (strain CCMP1986 / NIES-2087 / MED4).